The following is a 379-amino-acid chain: Deoxyhypusine synthase (379 aa).

NAD(+)-binding positions include Ser-104–Ser-108, Thr-130–Gly-132, Glu-136, and Asp-237. Residue Glu-135–Glu-136 coordinates spermidine. Residue Asp-242 participates in spermidine binding. Gly-293 provides a ligand contact to NAD(+). His-298 is a spermidine binding site. Position 318 to 319 (Thr-318 to Ala-319) interacts with NAD(+). Residues Gly-324–Asp-326 and Glu-333–Lys-339 contribute to the spermidine site. The active-site Nucleophile is the Lys-339. Residue Asp-352–Ala-353 participates in NAD(+) binding.

It belongs to the deoxyhypusine synthase family. In terms of assembly, homotetramer. The cofactor is NAD(+).

It carries out the reaction [eIF5A protein]-L-lysine + spermidine = [eIF5A protein]-deoxyhypusine + propane-1,3-diamine. Its pathway is protein modification; eIF5A hypusination. Functionally, catalyzes the NAD-dependent oxidative cleavage of spermidine and the subsequent transfer of the butylamine moiety of spermidine to the epsilon-amino group of a specific lysine residue of the eIF-5A precursor protein to form the intermediate deoxyhypusine residue. Also able to produce homospermidine from putrescine. The sequence is that of Deoxyhypusine synthase (DHS1) from Nicotiana tabacum (Common tobacco).